We begin with the raw amino-acid sequence, 216 residues long: Thymidylate kinase (216 aa).

Residue 10 to 17 (GIDGCGKT) participates in ATP binding.

The protein belongs to the thymidylate kinase family.

It catalyses the reaction dTMP + ATP = dTDP + ADP. Phosphorylation of dTMP to form dTDP in both de novo and salvage pathways of dTTP synthesis. The protein is Thymidylate kinase of Prochlorococcus marinus (strain MIT 9303).